Consider the following 167-residue polypeptide: MPRSQKNDNFIDKTFTIIADILLRIVPTSQREREAFTYYRDGMSAQAEGEYAEALQNYYEAMRLEIDPYDRSYILYNIGLIHTSNGEHAKALEYYFQALERNPSLPQAFNNVAVICHYRGEQAIQQQDIESSKAWFNQAAEYWKQAIQLAPGNYIEAQNWLKITGRI.

TPR repeat units lie at residues 35-68 (AFTYYRDGMSAQAEGEYAEALQNYYEAMRLEIDP), 72-105 (SYILYNIGLIHTSNGEHAKALEYYFQALERNPSL), and 120-153 (GEQAIQQQDIESSKAWFNQAAEYWKQAIQLAPGN).

Belongs to the Ycf3 family.

It localises to the plastid. The protein localises to the chloroplast thylakoid membrane. Essential for the assembly of the photosystem I (PSI) complex. May act as a chaperone-like factor to guide the assembly of the PSI subunits. This is Photosystem I assembly protein Ycf3 from Chara vulgaris (Common stonewort).